Reading from the N-terminus, the 355-residue chain is Probable dual-specificity RNA methyltransferase RlmN (355 aa).

Glu107 acts as the Proton acceptor in catalysis. The region spanning 113-341 (TDKRLTVCVS…VSVRYSRGLE (229 aa)) is the Radical SAM core domain. Cys120 and Cys346 are oxidised to a cystine. Residues Cys127, Cys131, and Cys134 each contribute to the [4Fe-4S] cluster site. Residues 174-175 (GE), Ser204, 227-229 (SLH), and Asn303 contribute to the S-adenosyl-L-methionine site. Cys346 acts as the S-methylcysteine intermediate in catalysis.

The protein belongs to the radical SAM superfamily. RlmN family. Requires [4Fe-4S] cluster as cofactor.

The protein resides in the cytoplasm. The enzyme catalyses adenosine(2503) in 23S rRNA + 2 reduced [2Fe-2S]-[ferredoxin] + 2 S-adenosyl-L-methionine = 2-methyladenosine(2503) in 23S rRNA + 5'-deoxyadenosine + L-methionine + 2 oxidized [2Fe-2S]-[ferredoxin] + S-adenosyl-L-homocysteine. It carries out the reaction adenosine(37) in tRNA + 2 reduced [2Fe-2S]-[ferredoxin] + 2 S-adenosyl-L-methionine = 2-methyladenosine(37) in tRNA + 5'-deoxyadenosine + L-methionine + 2 oxidized [2Fe-2S]-[ferredoxin] + S-adenosyl-L-homocysteine. Functionally, specifically methylates position 2 of adenine 2503 in 23S rRNA and position 2 of adenine 37 in tRNAs. The sequence is that of Probable dual-specificity RNA methyltransferase RlmN from Trichormus variabilis (strain ATCC 29413 / PCC 7937) (Anabaena variabilis).